A 394-amino-acid chain; its full sequence is Short-chain dehydrogenase/reductase family 42E member 1 (394 aa).

Tyr-153 functions as the Proton acceptor in the catalytic mechanism. Lys-157 contacts NAD(+). The next 2 membrane-spanning stretches (helical) occupy residues 283–303 (LPLT…FIVG) and 367–387 (FMLW…TWIL).

Belongs to the 3-beta-HSD family.

The protein localises to the membrane. In Mus musculus (Mouse), this protein is Short-chain dehydrogenase/reductase family 42E member 1 (Sdr42e1).